Reading from the N-terminus, the 221-residue chain is Chalcone--flavanone isomerase (221 aa).

The substrate site is built by Thr50, Asn115, and Thr192.

It belongs to the chalcone isomerase family.

The catalysed reaction is a chalcone = a flavanone.. The protein operates within secondary metabolite biosynthesis; flavonoid biosynthesis. Its function is as follows. Catalyzes the intramolecular cyclization of bicyclic chalcones into tricyclic (S)-flavanones. Responsible for the isomerization of 4,2',4',6'-tetrahydroxychalcone (also termed chalcone) into naringenin. This Phaseolus vulgaris (Kidney bean) protein is Chalcone--flavanone isomerase (CHI).